We begin with the raw amino-acid sequence, 446 residues long: Movement protein TGB1 (446 aa).

The segment at 40–60 (NKLDKRLQNTRKKNKNKEKTR) is disordered. A (+)RNA virus helicase ATP-binding domain is found at 160-303 (KACCKKERNQ…WLHVPIVFSS (144 aa)). 193 to 200 (GVPGSGKS) lines the ATP pocket. Residues 304-444 (DSSHRFGPET…CYGEEHRPDE (141 aa)) form the (+)RNA virus helicase C-terminal domain.

It belongs to the virgaviridae/benyvirus TGB1 movement protein family. As to quaternary structure, homooligomer. Interacts with movement protein TGB3. TGB1-TGB3-TGB2 complex formation is enhanced by ATP hydrolysis. Interacts with the suppressor of RNA silencing (via N-terminus). Requires Mg(2+) as cofactor.

It is found in the host cell junction. The protein localises to the host plasmodesma. The protein resides in the host nucleus. It localises to the host cytoplasm. Its subcellular location is the host nucleolus. It is found in the host cytoskeleton. It catalyses the reaction ATP + H2O = ADP + phosphate + H(+). Its function is as follows. Participates in the transport of viral genome to neighboring plant cells directly through plasmodesmata, without any budding. Multifunctional movement protein with RNA-binding, ATPase and helicase activities. Engages in homologous interactions leading to the formation of a ribonucleoprotein complex containing plus-sense viral RNAs (vRNPs). ATPase activity is probably required for vRNPs movement complex assembly. Intracellular delivery of TGBp1-containing vRNPs to plasmodesmata is facilitated by TGBp2 and TGBp3. This is Movement protein TGB1 from Arachis hypogaea (Peanut).